The following is a 145-amino-acid chain: MKKSARRQSRELATQGLYQWLLSNAAPGEIDAQLRGALGYDKADKELLDAILHGVIREHATLIEALTPSLDRPVDQLSPVERAVLLIATFELTHHVETPYRVIINEAVELAKTFGGSDGYKYVNGVLDKLAAKLRPAETQARRNG.

Belongs to the NusB family.

Its function is as follows. Involved in transcription antitermination. Required for transcription of ribosomal RNA (rRNA) genes. Binds specifically to the boxA antiterminator sequence of the ribosomal RNA (rrn) operons. The protein is Transcription antitermination protein NusB of Burkholderia ambifaria (strain MC40-6).